The sequence spans 806 residues: MRYDFQSIEKKWQAYWNEHQTFLTKETVDKPKYYVLDMFPYPSGSGLHVGHLEGYTATDIISRYKRSRGHNVLHPMGWDAFGLPAEQFAIKTGTHPKVITEKNVSSFKDTLMRMGFSYDWNREINTTDPGYYAWTQWIFLQLLDRGLAYTSEIDVNWCEELKTVLANEEVAEKVADGHAVVRKPLRQWVLKITAYAERLLSDLDLVDWPESVKQMQRNWIGRSEGVEIDFQLPCHRTSLKVYTTRPDTLFGATYLVISPEHPMAEKLATAEHLIEAKNYIEEAKRKTELERTGLQKEKTGVFTGSFAVNPANGQALPVWISDFVLTSYGTGAIMSVPAHDGRDWEFAKKFDLPIVEVIKSPHDVEEAVFEEKGSVCINSSNDDISLDGLPFETSFGVMADWLEKKGTGKRTVKYKLRDWIFSRQRYWGEPIPVKYYEDGTLRPESDLPLTLPDIEAYEPTTTGESPLANISEWLYGTDENGSFRRETNTMPQWAGSCWYYLRFIDPGNTEKPVDPKKEQYWMNVDLYVGGAEHAVLHLLYARFWHKVLFDLGVVSTKEPFQKLFNQGMILGEDNEKMSKSRGNVIPADQVLGSYGADAVRLYEMFLGPLEQVKPWNTNGIEGVSRFLSRVWRLIYPEPGSMAELNEAPLTEDLTRTMHKAVKKITDHTEQLKFNTAISEMMVFVNELHKSGSRNRTAVETLLLLLSPYAPHICEELWEAIGHDTSITEENWPLFDPALAADNEVTIAVQVNGKLRGTVTAPAGSPKNILLDSARKEESVRKFLDGMSIIKEVVVPDRLVNFVVKPG.

Positions 40 to 51 (PYPSGSGLHVGH) match the 'HIGH' region motif. The short motif at 576–580 (KMSKS) is the 'KMSKS' region element. K579 contacts ATP.

The protein belongs to the class-I aminoacyl-tRNA synthetase family.

The protein localises to the cytoplasm. It carries out the reaction tRNA(Leu) + L-leucine + ATP = L-leucyl-tRNA(Leu) + AMP + diphosphate. The protein is Leucine--tRNA ligase of Chlorobium phaeobacteroides (strain BS1).